Reading from the N-terminus, the 255-residue chain is D-aminoacyl-tRNA deacylase (255 aa).

Belongs to the DtdA deacylase family. As to quaternary structure, monomer. Requires Zn(2+) as cofactor.

It catalyses the reaction a D-aminoacyl-tRNA + H2O = a tRNA + a D-alpha-amino acid + H(+). The catalysed reaction is glycyl-tRNA(Ala) + H2O = tRNA(Ala) + glycine + H(+). In terms of biological role, D-aminoacyl-tRNA deacylase with broad substrate specificity. By recycling D-aminoacyl-tRNA to D-amino acids and free tRNA molecules, this enzyme counteracts the toxicity associated with the formation of D-aminoacyl-tRNA entities in vivo. This Methanocaldococcus jannaschii (strain ATCC 43067 / DSM 2661 / JAL-1 / JCM 10045 / NBRC 100440) (Methanococcus jannaschii) protein is D-aminoacyl-tRNA deacylase.